Reading from the N-terminus, the 629-residue chain is tRNA uridine 5-carboxymethylaminomethyl modification enzyme MnmG (629 aa).

Residues 18-23 (GGGHAG), Val130, and Ser188 each bind FAD. Position 280–294 (280–294 (GPRYCPSIEDKVVRF)) interacts with NAD(+). Position 377 (Gln377) interacts with FAD.

Belongs to the MnmG family. As to quaternary structure, homodimer. Heterotetramer of two MnmE and two MnmG subunits. FAD serves as cofactor.

The protein localises to the cytoplasm. In terms of biological role, NAD-binding protein involved in the addition of a carboxymethylaminomethyl (cmnm) group at the wobble position (U34) of certain tRNAs, forming tRNA-cmnm(5)s(2)U34. In Granulibacter bethesdensis (strain ATCC BAA-1260 / CGDNIH1), this protein is tRNA uridine 5-carboxymethylaminomethyl modification enzyme MnmG.